The sequence spans 246 residues: Phosphomannomutase 2 (246 aa).

Position 2 is an N-acetylalanine (alanine 2). Aspartate 12 functions as the Nucleophile in the catalytic mechanism. Positions 12 and 14 each coordinate Mg(2+). Aspartate 14 serves as the catalytic Proton donor/acceptor. 6 residues coordinate alpha-D-mannose 1-phosphate: arginine 21, arginine 123, arginine 134, arginine 141, serine 179, and aspartate 181. Residues aspartate 209, phenylalanine 221, aspartate 223, and threonine 226 each contribute to the Mg(2+) site.

The protein belongs to the eukaryotic PMM family. In terms of assembly, homodimer.

It localises to the cytoplasm. It catalyses the reaction alpha-D-mannose 1-phosphate = D-mannose 6-phosphate. It participates in nucleotide-sugar biosynthesis; GDP-alpha-D-mannose biosynthesis; alpha-D-mannose 1-phosphate from D-fructose 6-phosphate: step 2/2. Its function is as follows. Involved in the synthesis of the GDP-mannose and dolichol-phosphate-mannose required for a number of critical mannosyl transfer reactions. This is Phosphomannomutase 2 (PMM2) from Bos taurus (Bovine).